Reading from the N-terminus, the 110-residue chain is Progonadoliberin-2 (110 aa).

The first 26 residues, 1–26 (MASIGQGLVLLLLLLLLTAQPGPLKA), serve as a signal peptide directing secretion. The interval 25 to 85 (KAQHWSHGWY…KALAPPEDTV (61 aa)) is disordered. G36 carries the glycine amide modification.

The protein belongs to the GnRH family. In terms of tissue distribution, midbrain.

It localises to the secreted. In terms of biological role, stimulates the secretion of gonadotropins; it stimulates the secretion of both luteinizing and follicle-stimulating hormones. The polypeptide is Progonadoliberin-2 (GNRH2) (Suncus murinus (Asian house shrew)).